Here is a 992-residue protein sequence, read N- to C-terminus: Disks large-associated protein 1 (992 aa).

Disordered stretches follow at residues 150-209 (TKSH…SWWS) and 355-376 (KAMGDEDSGDSDTSPKPSPKVA). A Phosphoserine modification is found at S169. Residues 194–209 (RSNASNASPTSPSWWS) are compositionally biased toward low complexity. A phosphoserine mark is found at S362, S365, S368, S372, S389, S418, S421, S425, S428, S437, S509, S516, and S578. The residue at position 579 (T579) is a Phosphothreonine. A phosphoserine mark is found at S581 and S605. T606 bears the Phosphothreonine mark. Residues S608 and S611 each carry the phosphoserine modification. Interaction with DYL2 stretches follow at residues 665 to 676 (LSIGIQVDDAEE) and 687 to 698 (NKFQSVGVQVEE). The interval 914–980 (WKQMDPLDKK…QNSATESAES (67 aa)) is disordered. Basic and acidic residues-rich tracts occupy residues 918-927 (DPLDKKERRA) and 943-958 (IRERSLESSQRQEARK). S947 carries the phosphoserine modification. Positions 969 to 978 (VRQNSATESA) are enriched in polar residues. Positions 990–992 (TRL) match the PDZ-binding motif.

This sequence belongs to the SAPAP family. In terms of assembly, interacts with the guanylate kinase-like domain of DLG1, DLG2, DLG3, DLG4 and AIP1. Interacts with the PDZ domain of SHANK1, SHANK2 and SHANK3. Found in a complex with DLG4 and SHANK1, SHANK2 or SHANK3. Found in a complex with DLG4 and BEGAIN. Interacts with DYL2 and LRFN1. Interacts with MPP2 (via the SH3-Guanylate kinase-like sub-module). In terms of processing, ubiquitinated by TRIM3; leading to proteasomal degradation. Highest levels in the neocortex, part of the hippocampus, the granule cell layer of the cerebellum, the glomerular layer of the olfactory bulb, the inner plexiform layer of the retina, the ventral and dorsal horn of the spinal cord, the neuromuscular junction and the submandibular ganglion.

The protein localises to the cell membrane. It localises to the postsynaptic density. Its subcellular location is the synapse. In terms of biological role, part of the postsynaptic scaffold in neuronal cells. This Mus musculus (Mouse) protein is Disks large-associated protein 1 (Dlgap1).